We begin with the raw amino-acid sequence, 187 residues long: ATP synthase subunit b (187 aa).

A helical membrane pass occupies residues 36–53 (PYQWVSVAMLVLIAIMLW).

The protein belongs to the ATPase B chain family. As to quaternary structure, F-type ATPases have 2 components, F(1) - the catalytic core - and F(0) - the membrane proton channel. F(1) has five subunits: alpha(3), beta(3), gamma(1), delta(1), epsilon(1). F(0) has four main subunits: a(1), b(2) and c(10-14). The alpha and beta chains form an alternating ring which encloses part of the gamma chain. F(1) is attached to F(0) by a central stalk formed by the gamma and epsilon chains, while a peripheral stalk is formed by the delta and b chains.

It is found in the cell inner membrane. In terms of biological role, f(1)F(0) ATP synthase produces ATP from ADP in the presence of a proton or sodium gradient. F-type ATPases consist of two structural domains, F(1) containing the extramembraneous catalytic core and F(0) containing the membrane proton channel, linked together by a central stalk and a peripheral stalk. During catalysis, ATP synthesis in the catalytic domain of F(1) is coupled via a rotary mechanism of the central stalk subunits to proton translocation. Component of the F(0) channel, it forms part of the peripheral stalk, linking F(1) to F(0). This Erythrobacter litoralis (strain HTCC2594) protein is ATP synthase subunit b.